A 409-amino-acid polypeptide reads, in one-letter code: Salivary endonuclease (409 aa).

The N-terminal stretch at 1–20 is a signal peptide; it reads MHLQLNLCAILLSVLNGIQG. 2 N-linked (GlcNAc...) asparagine glycosylation sites follow: N37 and N102. Catalysis depends on H216, which acts as the Proton acceptor. N246 contacts Mg(2+). Residues N351 and N381 are each glycosylated (N-linked (GlcNAc...) asparagine).

Belongs to the DNA/RNA non-specific endonuclease family. Requires Mg(2+) as cofactor. Salivary gland.

The protein localises to the secreted. In terms of biological role, hydrolyzes single-stranded and double-stranded DNA with little sequence specificity. Inhibits contact pathway of blood coagulation in the host by preventing activation of coagulation factor XII (F12) triggered by soluble DNA. Modestly up-regulates expression of CSF2, CXCL1 and CXCL8 in cultured human dermal microvascular endothelial cells. At higher doses promotes host neutrophil recruitment at the injection site in mouse model. (Microbial infection) Increases Leishmania major survival in the host by disrupting parasite-induced neutrophil extracellular traps. Exacerbates L.major parasite infectivity and increases cutaneous lesions in mouse model. The protein is Salivary endonuclease of Lutzomyia longipalpis (Sand fly).